The chain runs to 298 residues: ADP/ATP translocase 2 (298 aa).

The residue at position 1 (methionine 1) is an N-acetylmethionine. Topologically, residues methionine 1 to serine 7 are mitochondrial intermembrane. Threonine 2 carries the N-acetylthreonine; in ADP/ATP translocase 2, N-terminally processed modification. The stretch at valine 6 to isoleucine 98 is one Solcar 1 repeat. Serine 7 carries the phosphoserine modification. A helical transmembrane segment spans residues phenylalanine 8–glutamine 37. An N6-malonyllysine modification is found at lysine 23. At valine 38–asparagine 74 the chain is on the mitochondrial matrix side. Lysine 43 carries the post-translational modification N6-succinyllysine. Residue lysine 52 is modified to N6,N6,N6-trimethyllysine; alternate. The residue at position 52 (lysine 52) is an N6,N6-dimethyllysine; alternate. N6-methyllysine; alternate is present on lysine 52. Residues leucine 75–phenylalanine 99 form a helical membrane-spanning segment. ADP contacts are provided by arginine 80 and lysine 92. Lysine 92 and lysine 96 each carry N6-malonyllysine. At leucine 100 to phenylalanine 109 the chain is on the mitochondrial intermembrane side. Position 105 is an N6-acetyllysine; alternate (lysine 105). Lysine 105 bears the N6-succinyllysine; alternate mark. A helical transmembrane segment spans residues tryptophan 110 to phenylalanine 130. Solcar repeat units follow at residues arginine 111 to methionine 201 and isoleucine 212 to tyrosine 297. Over valine 131–asparagine 178 the chain is Mitochondrial matrix. Lysine 147 carries the post-translational modification N6-methyllysine; alternate. N6-acetyllysine; alternate occurs at positions 147 and 155. Lysine 147 and lysine 155 each carry N6-succinyllysine; alternate. An N6-malonyllysine; alternate modification is found at lysine 147. Lysine 163 and lysine 166 each carry N6-acetyllysine. The chain crosses the membrane as a helical span at residues valine 179–lysine 199. Residues glycine 200–isoleucine 210 lie on the Mitochondrial intermembrane side of the membrane. A helical membrane pass occupies residues phenylalanine 211–phenylalanine 231. Residues aspartate 232–glycine 273 lie on the Mitochondrial matrix side of the membrane. Arginine 235 contributes to the ADP binding site. The important for transport activity stretch occupies residues arginine 235–methionine 240. The Nucleotide carrier signature motif motif lies at arginine 235 to methionine 240. The residue at position 268 (lysine 268) is an N6-acetyllysine; alternate. The residue at position 268 (lysine 268) is an N6-succinyllysine; alternate. Residues alanine 274 to tyrosine 291 traverse the membrane as a helical segment. Topologically, residues aspartate 292 to threonine 298 are mitochondrial intermembrane.

The protein belongs to the mitochondrial carrier (TC 2.A.29) family. In terms of assembly, monomer. Component of the MMXD complex, which includes CIAO1, ERCC2, CIAO2B, MMS19 and SLC25A5/ANT2. Interacts with AK4. Interacts with TIMM44; leading to inhibit the presequence translocase TIMM23, thereby promoting stabilization of PINK1. Post-translationally, trimethylated by ANTKMT at Lys-52.

Its subcellular location is the mitochondrion inner membrane. The protein localises to the membrane. The enzyme catalyses ADP(in) + ATP(out) = ADP(out) + ATP(in). The catalysed reaction is H(+)(in) = H(+)(out). Its activity is regulated as follows. The matrix-open state (m-state) is inhibited by the membrane-permeable bongkrekic acid (BKA). The cytoplasmic-open state (c-state) is inhibited by the membrane-impermeable toxic inhibitor carboxyatractyloside (CATR). Proton transporter activity is inhibited by ADP:ATP antiporter activity. In terms of biological role, ADP:ATP antiporter that mediates import of ADP into the mitochondrial matrix for ATP synthesis, and export of ATP out to fuel the cell. Cycles between the cytoplasmic-open state (c-state) and the matrix-open state (m-state): operates by the alternating access mechanism with a single substrate-binding site intermittently exposed to either the cytosolic (c-state) or matrix (m-state) side of the inner mitochondrial membrane. In addition to its ADP:ATP antiporter activity, also involved in mitochondrial uncoupling and mitochondrial permeability transition pore (mPTP) activity. Plays a role in mitochondrial uncoupling by acting as a proton transporter: proton transport uncouples the proton flows via the electron transport chain and ATP synthase to reduce the efficiency of ATP production and cause mitochondrial thermogenesis. Proton transporter activity is inhibited by ADP:ATP antiporter activity, suggesting that SLC25A5/ANT2 acts as a master regulator of mitochondrial energy output by maintaining a delicate balance between ATP production (ADP:ATP antiporter activity) and thermogenesis (proton transporter activity). Proton transporter activity requires free fatty acids as cofactor, but does not transport it. Probably mediates mitochondrial uncoupling in tissues that do not express UCP1. Also plays a key role in mPTP opening, a non-specific pore that enables free passage of the mitochondrial membranes to solutes of up to 1.5 kDa, and which contributes to cell death. It is however unclear if SLC25A5/ANT2 constitutes a pore-forming component of mPTP or regulates it. Acts as a regulator of mitophagy independently of ADP:ATP antiporter activity: promotes mitophagy via interaction with TIMM44, leading to inhibit the presequence translocase TIMM23, thereby promoting stabilization of PINK1. As part of the mitotic spindle-associated MMXD complex it may play a role in chromosome segregation. This chain is ADP/ATP translocase 2, found in Tachyglossus aculeatus aculeatus (Southeast Australian short-beaked echidna).